Consider the following 248-residue polypeptide: Ras-like protein family member 11B (248 aa).

The small GTPase-like stretch occupies residues 30–248 (ASSRVIKIAV…SSKVRTATSV (219 aa)). GTP contacts are provided by residues 41-48 (GGSGVGKT), 88-99 (DTPGVQINEQNL), and 153-156 (NKAD). The tract at residues 206 to 228 (QNTGTSERRKNSIIPRPKSPNMQ) is disordered.

This sequence belongs to the small GTPase superfamily. Ras family.

It catalyses the reaction GTP + H2O = GDP + phosphate + H(+). In Xenopus laevis (African clawed frog), this protein is Ras-like protein family member 11B.